The sequence spans 275 residues: Putative rhamnulose-1-phosphate aldolase (275 aa).

E117 is a catalytic residue. Zn(2+) contacts are provided by H141, H143, and H212.

The protein belongs to the aldolase class II family. RhaD subfamily. As to quaternary structure, homotetramer. Zn(2+) is required as a cofactor.

It localises to the cytoplasm. It catalyses the reaction L-rhamnulose 1-phosphate = (S)-lactaldehyde + dihydroxyacetone phosphate. Its pathway is carbohydrate degradation; L-rhamnose degradation; glycerone phosphate from L-rhamnose: step 3/3. In terms of biological role, catalyzes the reversible cleavage of L-rhamnulose-1-phosphate to dihydroxyacetone phosphate (DHAP) and L-lactaldehyde. This Salmonella typhi protein is Putative rhamnulose-1-phosphate aldolase.